The sequence spans 640 residues: 1,4-alpha-glucan branching enzyme GlgB (640 aa).

The active-site Nucleophile is Asp-318. Glu-371 (proton donor) is an active-site residue.

This sequence belongs to the glycosyl hydrolase 13 family. GlgB subfamily. In terms of assembly, monomer.

The catalysed reaction is Transfers a segment of a (1-&gt;4)-alpha-D-glucan chain to a primary hydroxy group in a similar glucan chain.. It functions in the pathway glycan biosynthesis; glycogen biosynthesis. In terms of biological role, catalyzes the formation of the alpha-1,6-glucosidic linkages in glycogen by scission of a 1,4-alpha-linked oligosaccharide from growing alpha-1,4-glucan chains and the subsequent attachment of the oligosaccharide to the alpha-1,6 position. This is 1,4-alpha-glucan branching enzyme GlgB from Francisella tularensis subsp. holarctica (strain FTNF002-00 / FTA).